The primary structure comprises 661 residues: MASVGKPSLEDARRGTGSPKMKARENAKDTLCRNVTIYGRCRYEDKGCAFNHDPHKNSNQSDNASKKRFNVDSPSFTPSLLPSNGSSPTSSSSSLKKSSTISPKAANAAPFQPRTAASRSNTSTPGVRQDAVAPDWSVAEAQEFIPQGFDPTHMSPLHGNGNPGVASANAFDPFVSTPNPLAAPGAVGPVQANPFSHDAAAATLGGAYYANQAGFQQPVQYHLYAPIGPHNQNALAYQRNVHDLFLPNDFREELQKKAAATLQTLPNTQLPAQVDYFHSLVPLDLNHQKNAAIFGYPSWVYKAQSTKDGSYYALRRLEGFRLTNEKAIRSVQAWKRIASGSMVTIHDAFTSRSFQDSSLIFVTDYHPLSKTLAEQHLSAGGPRFQARHNAHVPEQILWGYITQIANALKCIHSAGLAARIIDPSKILLTGRNRIRLNACAIMDVVQYDAQRSVADLQRQDLVNFGQLILTLGANQPNVIHNPSKAMEHFTRAYSPQLKNTVMWLLGGMQKDQERNIDILINGISSQLMSTFDSALHLDDQLTSDLGRELENGRLVRLLTKLNFINERPEHEHDRQWSENGERFYLKIFRDYVFHQVDASGDPVVDLGHVLTCLNKLDAGTDERITLVSRDEQTCFVVSYKELKKGLESSFQALLRPSRRPH.

Disordered regions lie at residues Met-1 to Asp-29 and Asp-53 to Ala-131. The segment at Asn-26–His-55 adopts a C3H1-type zinc-finger fold. Residues Asn-63–Ser-83 carry the PABPC-interacting motif-2 (PAM-2) motif. The segment covering Thr-77 to Lys-104 has biased composition (low complexity). Residues Thr-115–Gly-126 are compositionally biased toward polar residues. Residues Gln-263 to Ser-524 are pseudokinase domain. ATP contacts are provided by residues Arg-315, Asp-364–Thr-371, and Ser-424–Lys-425. Residues Ser-525 to Phe-563 adopt a coiled-coil conformation. The segment at Ile-564–His-661 is knob domain.

Belongs to the protein kinase superfamily. PAN3 family. Homodimer. Forms a heterotrimer with a catalytic subunit pan2 to form the poly(a)-nuclease (PAN) deadenylation complex. Interacts (via PAM-2 motif) with poly(A)-binding protein pab1 (via PABC domain), conferring substrate specificity of the enzyme complex.

The protein resides in the cytoplasm. Regulatory subunit of the poly(A)-nuclease (PAN) deadenylation complex, one of two cytoplasmic mRNA deadenylases involved in mRNA turnover. PAN specifically shortens poly(A) tails of RNA and the activity is stimulated by poly(A)-binding protein pab1. PAN deadenylation is followed by rapid degradation of the shortened mRNA tails by the CCR4-NOT complex. Deadenylated mRNAs are then degraded by two alternative mechanisms, namely exosome-mediated 3'-5' exonucleolytic degradation, or deadenylation-dependent mRNA decaping and subsequent 5'-3' exonucleolytic degradation by XRN1. May also be involved in post-transcriptional maturation of mRNA poly(A) tails. pan3 acts as a positive regulator for PAN activity, recruiting the catalytic subunit pan2 to mRNA via its interaction with RNA and with pab1. This is PAN2-PAN3 deadenylation complex subunit pan3 from Emericella nidulans (strain FGSC A4 / ATCC 38163 / CBS 112.46 / NRRL 194 / M139) (Aspergillus nidulans).